We begin with the raw amino-acid sequence, 260 residues long: Proteasome subunit alpha (260 aa).

Residues 241–260 (VEEEEVKEKEEDYSELDSHY) form a disordered region.

It belongs to the peptidase T1A family. In terms of assembly, the 20S proteasome core is composed of 14 alpha and 14 beta subunits that assemble into four stacked heptameric rings, resulting in a barrel-shaped structure. The two inner rings, each composed of seven catalytic beta subunits, are sandwiched by two outer rings, each composed of seven alpha subunits. The catalytic chamber with the active sites is on the inside of the barrel. Has a gated structure, the ends of the cylinder being occluded by the N-termini of the alpha-subunits. Is capped at one or both ends by the proteasome regulatory ATPase, PAN.

The protein localises to the cytoplasm. Its activity is regulated as follows. The formation of the proteasomal ATPase PAN-20S proteasome complex, via the docking of the C-termini of PAN into the intersubunit pockets in the alpha-rings, triggers opening of the gate for substrate entry. Interconversion between the open-gate and close-gate conformations leads to a dynamic regulation of the 20S proteasome proteolysis activity. Component of the proteasome core, a large protease complex with broad specificity involved in protein degradation. The protein is Proteasome subunit alpha of Pyrococcus horikoshii (strain ATCC 700860 / DSM 12428 / JCM 9974 / NBRC 100139 / OT-3).